The sequence spans 293 residues: Protein orai (293 aa).

Topologically, residues 1-122 (MPRSHDPSRV…RAQLKASSRT (122 aa)) are cytoplasmic. The disordered stretch occupies residues 62–81 (STAGGGSRNGVGSKEGSVTS). The chain crosses the membrane as a helical span at residues 123–141 (SALLAGFAMVCLVELQYDQ). Residues 142–146 (STPKP) lie on the Extracellular side of the membrane. A helical transmembrane segment spans residues 147–167 (LLIVLGVVTSLLVSVHLLALM). Residues 168-198 (MSTCILPYMEATGCTQDSPHIKLKFYIDLSW) are Cytoplasmic-facing. The chain crosses the membrane as a helical span at residues 199-219 (LFSTCIGLLLFLVEIGVIFYV). At 220–230 (KFTAVGYPTAG) the chain is on the extracellular side. The chain crosses the membrane as a helical span at residues 231 to 251 (YITTAMLVPVGVVFVVFSYLI). Residues 252 to 293 (HKNRVSHSLGRFKHKVDTMKQFLDVEANLQKSTLAPSTIRDI) lie on the Cytoplasmic side of the membrane.

The protein belongs to the Orai family. As to expression, expressed in gonad sheath cells, hypodermis, intestine and spermatheca. Coexpressed with stim-1.

It is found in the membrane. In terms of biological role, ca(2+) release-activated Ca(2+)-like (CRAC-like) channel subunit which mediates Ca(2+) influx and increase in Ca(2+)-selective current by synergy with the Ca(2+) sensor, stim-1. Required for Ca(2+) and IP3-dependent contractile activity of sheath cells and the spermatheca. Affects brood size and somatic cell function. In Caenorhabditis elegans, this protein is Protein orai (orai-1).